The sequence spans 579 residues: SLAIN motif-containing protein 1 (579 aa).

Disordered stretches follow at residues 1–21 (MMAEQVKCASPVAASGAGPGP), 60–95 (LLLQPPPPSAPPPAGACSPLATHRAPASTTSPGPGA), 135–162 (GGGGSPEPGTAGTPPGEAATPPLPPPTL), 233–258 (YTSRGSPLSPQSSIDSELSTSELEDD), 289–313 (STSASVSRNSSSVSLSSGKKGTCSD), and 347–454 (IPHS…PGQI). Residues 9–21 (ASPVAASGAGPGP) are compositionally biased toward low complexity. Residues 21–56 (PVVNAELEVKKLQELVRKLEKQNEQLRSRAASAAAA) adopt a coiled-coil conformation. The segment covering 63–73 (QPPPPSAPPPA) has biased composition (pro residues). A compositionally biased stretch (low complexity) spans 141–154 (EPGTAGTPPGEAAT). The span at 233 to 243 (YTSRGSPLSPQ) shows a compositional bias: polar residues. Position 241 is a phosphoserine (Ser-241). Low complexity-rich tracts occupy residues 244 to 253 (SSIDSELSTS) and 289 to 305 (STSASVSRNSSSVSLSS). The span at 362 to 373 (SPSTQYFPSNNF) shows a compositional bias: polar residues. Residues 374 to 390 (QQPQYYPPQAQTADQQP) are compositionally biased toward low complexity. The span at 412–432 (AAASSNLSSPVTVRSSQSFDS) shows a compositional bias: polar residues. The residue at position 469 (Arg-469) is an Asymmetric dimethylarginine. Residues 479-516 (SPTVQGSSSSGSSGSSGGSGSGMPLSNGTQLYSTTGIP) are disordered. A compositionally biased stretch (polar residues) spans 502 to 516 (PLSNGTQLYSTTGIP). Asymmetric dimethylarginine is present on Arg-554.

The protein belongs to the SLAIN motif-containing family. Interacts with MAPRE1, MAPRE2, MAPRE3 and CKAP5. Interacts with ZDHHC17 (via ANK repeats). In terms of tissue distribution, expressed in embryonic stem cells. Expressed in adult bone marrow, brain, kidney, lung, testis and thymus. Expressed in colon. Isoform 1 is highly expressed in brain. Isoform 2 is more widely expressed in bone marrow, brain, colon, kidney, lung and thymus.

It is found in the cytoplasm. The protein localises to the cytoskeleton. Functionally, microtubule plus-end tracking protein that might be involved in the regulation of cytoplasmic microtubule dynamics, microtubule organization and microtubule elongation. The polypeptide is SLAIN motif-containing protein 1 (Slain1) (Mus musculus (Mouse)).